Here is a 312-residue protein sequence, read N- to C-terminus: Mas-related G-protein coupled receptor member E (312 aa).

Over 1–20 (MMEPREAGQHVGAANGAQED) the chain is Extracellular. The chain crosses the membrane as a helical span at residues 21 to 41 (VAFNLIILSLTEGLGLGGLLG). Over 42–59 (NGAVLWLLSSNVYRNPFA) the chain is Cytoplasmic. A helical membrane pass occupies residues 60-80 (IYLLDVACADLIFLGCHMVAI). Residues 81 to 106 (VPDLLQGRLDFPGFVQTSLATLRFFC) are Extracellular-facing. The chain crosses the membrane as a helical span at residues 107 to 127 (YIVGLSLLAAVSVEQCLAALF). The Cytoplasmic segment spans residues 128-141 (PAWYSCRRPRHLTT). The helical transmembrane segment at 142–162 (CVCALTWALCLLLHLLLSGAC) threads the bilayer. At 163-176 (TQFFGEPSRHLCRT) the chain is on the extracellular side. A helical membrane pass occupies residues 177 to 197 (LWLVAAVLLALLCCTMCGASL). Over 198–217 (MLLLRVERGPQRPPPRGFPG) the chain is Cytoplasmic. Residues 218 to 238 (LILLTVLLFLFCGLPFGIYWL) form a helical membrane-spanning segment. At 239–241 (SRN) the chain is on the extracellular side. The helical transmembrane segment at 242–262 (LLWYIPHYFYHFSFLMAAVHC) threads the bilayer. The Cytoplasmic portion of the chain corresponds to 263 to 312 (AAKPVVYFCLGSAQGRRLPLRLVLQRALGDEAELGAVRETSRRGLVDIAA).

Belongs to the G-protein coupled receptor 1 family. Mas subfamily.

The protein resides in the cell membrane. Orphan receptor. May regulate nociceptor function and/or development, including the sensation or modulation of pain. In Homo sapiens (Human), this protein is Mas-related G-protein coupled receptor member E (MRGPRE).